The primary structure comprises 727 residues: Glycerol-3-phosphate dehydrogenase, mitochondrial (727 aa).

The transit peptide at 1-42 (MAFQKAVKRTVLVCGGALATVLGLSQCSHYRRKQVNLACLKA) directs the protein to the mitochondrion. Position 71-99 (71-99 (DILVIGGGATGSGCALDAVTRGLKTALVE)) interacts with FAD. Y601 is modified (phosphotyrosine). EF-hand domains are found at residues 623-658 (SDIE…INVK) and 659-694 (IDEN…IQKG). Residues D672, N674, N676, Q678, and E683 each coordinate Ca(2+).

This sequence belongs to the FAD-dependent glycerol-3-phosphate dehydrogenase family. FAD is required as a cofactor.

It is found in the mitochondrion. It carries out the reaction a quinone + sn-glycerol 3-phosphate = dihydroxyacetone phosphate + a quinol. It participates in polyol metabolism; glycerol degradation via glycerol kinase pathway; glycerone phosphate from sn-glycerol 3-phosphate (aerobic route): step 1/1. Its activity is regulated as follows. Calcium-binding enhance the activity of the enzyme. Functionally, calcium-responsive mitochondrial glycerol-3-phosphate dehydrogenase which seems to be a key component of the pancreatic beta-cell glucose-sensing device. This is Glycerol-3-phosphate dehydrogenase, mitochondrial (GPD2) from Mesocricetus auratus (Golden hamster).